The chain runs to 334 residues: Ornithine carbamoyltransferase, catabolic (334 aa).

Residues 57-60 (STRT), glutamine 84, arginine 108, and 135-138 (HPTQ) contribute to the carbamoyl phosphate site. Residues asparagine 169, aspartate 233, and 237-238 (SM) contribute to the L-ornithine site. Carbamoyl phosphate contacts are provided by residues 275–276 (CL) and arginine 320.

The protein belongs to the aspartate/ornithine carbamoyltransferase superfamily. OTCase family.

The protein resides in the cytoplasm. It carries out the reaction carbamoyl phosphate + L-ornithine = L-citrulline + phosphate + H(+). Its pathway is amino-acid degradation; L-arginine degradation via ADI pathway; carbamoyl phosphate from L-arginine: step 2/2. Reversibly catalyzes the transfer of the carbamoyl group from carbamoyl phosphate (CP) to the N(epsilon) atom of ornithine (ORN) to produce L-citrulline. The sequence is that of Ornithine carbamoyltransferase, catabolic (arcB) from Salmonella typhimurium (strain LT2 / SGSC1412 / ATCC 700720).